Consider the following 475-residue polypeptide: Ribulose bisphosphate carboxylase large chain (475 aa).

A propeptide spanning residues 1 to 2 (MS) is cleaved from the precursor. P3 bears the N-acetylproline mark. Residue K14 is modified to N6,N6,N6-trimethyllysine. The substrate site is built by N123 and T173. The active-site Proton acceptor is K175. Residue K177 participates in substrate binding. K201, D203, and E204 together coordinate Mg(2+). N6-carboxylysine is present on K201. The active-site Proton acceptor is the H294. R295, H327, and S379 together coordinate substrate.

Belongs to the RuBisCO large chain family. Type I subfamily. In terms of assembly, heterohexadecamer of 8 large chains and 8 small chains; disulfide-linked. The disulfide link is formed within the large subunit homodimers. Mg(2+) is required as a cofactor. In terms of processing, the disulfide bond which can form in the large chain dimeric partners within the hexadecamer appears to be associated with oxidative stress and protein turnover.

The protein localises to the plastid. It localises to the chloroplast. The catalysed reaction is 2 (2R)-3-phosphoglycerate + 2 H(+) = D-ribulose 1,5-bisphosphate + CO2 + H2O. It catalyses the reaction D-ribulose 1,5-bisphosphate + O2 = 2-phosphoglycolate + (2R)-3-phosphoglycerate + 2 H(+). Its function is as follows. RuBisCO catalyzes two reactions: the carboxylation of D-ribulose 1,5-bisphosphate, the primary event in carbon dioxide fixation, as well as the oxidative fragmentation of the pentose substrate in the photorespiration process. Both reactions occur simultaneously and in competition at the same active site. This is Ribulose bisphosphate carboxylase large chain from Bouvardia ternifolia (Firecrackerbush).